Reading from the N-terminus, the 466-residue chain is 3-isopropylmalate dehydratase large subunit (466 aa).

[4Fe-4S] cluster contacts are provided by Cys347, Cys407, and Cys410.

Belongs to the aconitase/IPM isomerase family. LeuC type 1 subfamily. In terms of assembly, heterodimer of LeuC and LeuD. The cofactor is [4Fe-4S] cluster.

The catalysed reaction is (2R,3S)-3-isopropylmalate = (2S)-2-isopropylmalate. It participates in amino-acid biosynthesis; L-leucine biosynthesis; L-leucine from 3-methyl-2-oxobutanoate: step 2/4. In terms of biological role, catalyzes the isomerization between 2-isopropylmalate and 3-isopropylmalate, via the formation of 2-isopropylmaleate. This is 3-isopropylmalate dehydratase large subunit from Shewanella woodyi (strain ATCC 51908 / MS32).